The sequence spans 541 residues: EH domain-containing protein 4 (541 aa).

Met1 carries the N-acetylmethionine modification. Residues 58-289 (FENKPMILLV…DLFRDIQSLP (232 aa)) form the Dynamin-type G domain. The tract at residues 68 to 75 (GQYSTGKT) is G1 motif. ATP is bound at residue 68 to 75 (GQYSTGKT). Residues 94–95 (EP) form a G2 motif region. The G3 motif stretch occupies residues 156-159 (DSPG). Ser162 carries the phosphoserine modification. A G4 motif region spans residues 222–225 (NKAD). Lys223 lines the ATP pocket. Val246 is a region of interest (G5 motif). Trp261 contributes to the ATP binding site. The region spanning 447-535 (DKPVYDELFY…PHLVPPSHRK (89 aa)) is the EH domain. The residue at position 451 (Tyr451) is a Phosphotyrosine. Ser459 carries the post-translational modification Phosphoserine. Residues 479–514 (LPNSVLGKIWKLADCDCDGMLDEEEFALAKHLIKIK) enclose the EF-hand domain. Ca(2+) contacts are provided by Asp492, Asp494, Asp496, Met498, and Glu503.

This sequence belongs to the TRAFAC class dynamin-like GTPase superfamily. Dynamin/Fzo/YdjA family. EHD subfamily. Homooligomer, and heterooligomer with EHD1, EHD2 and EHD3. Forms a complex with EHD4 and MICALL1; the complex controls CDH5 trafficking and coordinates angiogenesis. As to expression, highly expressed in pancreas and heart.

The protein localises to the early endosome membrane. It localises to the recycling endosome membrane. Its subcellular location is the cell membrane. The protein resides in the cell junction. It is found in the adherens junction. ATP- and membrane-binding protein that probably controls membrane reorganization/tubulation upon ATP hydrolysis. Plays a role in early endosomal transport. During sprouting angiogenesis, in complex with PACSIN2 and MICALL1, forms recycling endosome-like tubular structure at asymmetric adherens junctions to control CDH5 trafficking. The sequence is that of EH domain-containing protein 4 from Homo sapiens (Human).